Here is a 103-residue protein sequence, read N- to C-terminus: MIVTTTSGIQGKEIIEYIDIVNGEAIMGANIVRDLFASVRDVVGGRAGAYESKLKDARDIAMDEMKELAKQKGANAIIGIDVDYEVVRDGMLMVAVSGTAVRI.

The protein belongs to the UPF0145 family.

The sequence is that of UPF0145 protein BC_1816 from Bacillus cereus (strain ATCC 14579 / DSM 31 / CCUG 7414 / JCM 2152 / NBRC 15305 / NCIMB 9373 / NCTC 2599 / NRRL B-3711).